A 487-amino-acid chain; its full sequence is Proline--tRNA ligase (487 aa).

This sequence belongs to the class-II aminoacyl-tRNA synthetase family. ProS type 3 subfamily. Homodimer.

It localises to the cytoplasm. The enzyme catalyses tRNA(Pro) + L-proline + ATP = L-prolyl-tRNA(Pro) + AMP + diphosphate. Its function is as follows. Catalyzes the attachment of proline to tRNA(Pro) in a two-step reaction: proline is first activated by ATP to form Pro-AMP and then transferred to the acceptor end of tRNA(Pro). In Pyrobaculum neutrophilum (strain DSM 2338 / JCM 9278 / NBRC 100436 / V24Sta) (Thermoproteus neutrophilus), this protein is Proline--tRNA ligase.